Here is a 123-residue protein sequence, read N- to C-terminus: MQIASITRRGFLKVACVTTGAALIGIRMTGKAVAAVKQIKDYMLDRINGVYGADAKFPVRASQDNTQVKALYKSYLEKPLGHKSHDLLHTHWFDKSKGVKELTTAGKLPNPRASEFEGPYPYE.

Positions 1-34 (MQIASITRRGFLKVACVTTGAALIGIRMTGKAVA) form a signal peptide, tat-type signal. Residues 103–123 (TTAGKLPNPRASEFEGPYPYE) are disordered.

As to quaternary structure, heterodimer of a large and a small subunit. In terms of processing, predicted to be exported by the Tat system. The position of the signal peptide cleavage has been experimentally proven.

It is found in the periplasm. The catalysed reaction is H2 + 2 oxidized [2Fe-2S]-[ferredoxin] = 2 reduced [2Fe-2S]-[ferredoxin] + 2 H(+). Its function is as follows. May be involved in hydrogen uptake for the reduction of sulfate to hydrogen sulfide in an electron transport chain. Cytochrome c3 is likely to be the physiological electron carrier for the enzyme. This chain is Periplasmic [Fe] hydrogenase small subunit (hydB), found in Nitratidesulfovibrio vulgaris (strain ATCC 29579 / DSM 644 / CCUG 34227 / NCIMB 8303 / VKM B-1760 / Hildenborough) (Desulfovibrio vulgaris).